We begin with the raw amino-acid sequence, 83 residues long: uncharacterized protein (83 aa).

This is an uncharacterized protein from Escherichia coli (strain K12).